Reading from the N-terminus, the 199-residue chain is Pyridoxal 5'-phosphate synthase subunit PdxT (199 aa).

49–51 (GES) is an L-glutamine binding site. C81 functions as the Nucleophile in the catalytic mechanism. L-glutamine contacts are provided by residues R110 and 139-140 (IR). Catalysis depends on charge relay system residues H175 and E177.

The protein belongs to the glutaminase PdxT/SNO family. As to quaternary structure, in the presence of PdxS, forms a dodecamer of heterodimers. Only shows activity in the heterodimer.

The enzyme catalyses aldehydo-D-ribose 5-phosphate + D-glyceraldehyde 3-phosphate + L-glutamine = pyridoxal 5'-phosphate + L-glutamate + phosphate + 3 H2O + H(+). It carries out the reaction L-glutamine + H2O = L-glutamate + NH4(+). Its pathway is cofactor biosynthesis; pyridoxal 5'-phosphate biosynthesis. Functionally, catalyzes the hydrolysis of glutamine to glutamate and ammonia as part of the biosynthesis of pyridoxal 5'-phosphate. The resulting ammonia molecule is channeled to the active site of PdxS. This Frankia casuarinae (strain DSM 45818 / CECT 9043 / HFP020203 / CcI3) protein is Pyridoxal 5'-phosphate synthase subunit PdxT.